The sequence spans 1349 residues: Indole-3-acetaldehyde oxidase (1349 aa).

The region spanning Ala-7 to Ile-94 is the 2Fe-2S ferredoxin-type domain. 3 residues coordinate [2Fe-2S] cluster: Cys-46, Cys-51, and Cys-54. In terms of domain architecture, FAD-binding PCMH-type spans Val-237 to Ser-415.

Belongs to the xanthine dehydrogenase family. Aldehyde oxidases (AO) are homodimers and heterodimers of AO subunits. The cofactor is [2Fe-2S] cluster. FAD is required as a cofactor. Mo-molybdopterin serves as cofactor. Mostly expressed in coleoptiles, and, to a lower extent, in mesocotyl and roots.

Its subcellular location is the cytoplasm. It catalyses the reaction indole-3-acetaldehyde + O2 + H2O = (indol-3-yl)acetate + H2O2 + H(+). In higher plants aldehyde oxidases (AO) appear to be homo- and heterodimeric assemblies of AO subunits with probably different physiological functions. Involved in the biosynthesis of auxin. This is Indole-3-acetaldehyde oxidase (AO2) from Zea mays (Maize).